We begin with the raw amino-acid sequence, 690 residues long: Eukaryotic translation initiation factor 3 subunit B (690 aa).

Residues 1–11 are compositionally biased toward basic and acidic residues; sequence MAKKKSEEHSG. The tract at residues 1–36 is disordered; it reads MAKKKSEEHSGADANDSDYQEEPNFEDPPGFVDNIS. Acidic residues predominate over residues 15–25; it reads NDSDYQEEPNF. Residues 57–141 form the RRM domain; the sequence is SVVVVDNIPK…HTFAVNLFTD (85 aa). 5 WD repeats span residues 207 to 246, 293 to 331, 334 to 369, 442 to 484, and 530 to 575; these read TRER…KIQK, DGMS…LLDL, IKIP…TLME, EIRE…KPSL, and PDHF…IKRT. A coiled-coil region spans residues 595-645; that stretch reads EEKQKEIKKNLKKYYAAFEQKDRLRLTRASKELLEKRSQLRETFMEYRNKR.

The protein belongs to the eIF-3 subunit B family. As to quaternary structure, component of the eukaryotic translation initiation factor 3 (eIF-3) complex. The eIF-3 complex interacts with pix. Interacts with mxt.

The protein resides in the cytoplasm. In terms of biological role, RNA-binding component of the eukaryotic translation initiation factor 3 (eIF-3) complex, which is involved in protein synthesis of a specialized repertoire of mRNAs and, together with other initiation factors, stimulates binding of mRNA and methionyl-tRNAi to the 40S ribosome. The eIF-3 complex specifically targets and initiates translation of a subset of mRNAs involved in cell proliferation. This is Eukaryotic translation initiation factor 3 subunit B from Drosophila yakuba (Fruit fly).